A 982-amino-acid chain; its full sequence is Zinc finger and BTB domain-containing protein 4 (982 aa).

One can recognise a BTB domain in the interval 30-131; that stretch reads CDVTLIAGDT…IYSARLALPG (102 aa). Lys40 is covalently cross-linked (Glycyl lysine isopeptide (Lys-Gly) (interchain with G-Cter in SUMO2)). The disordered stretch occupies residues 71 to 103; sequence TGGSAPSPATTTAASSSSSSPPPASPHSSSPPR. Low complexity predominate over residues 74 to 89; the sequence is SAPSPATTTAASSSSS. The tract at residues 165–324 is interaction with CBFA2T3; it reads VPPAPTSMVT…CRYCEKVFAL (160 aa). A C2H2-type 1; atypical zinc finger spans residues 210–232; the sequence is FPCPRCGKSFIHPKRLQTHEAQC. The disordered stretch occupies residues 234–255; it reads RGSNTRGSAGLGPGVSGSGGPA. Gly residues predominate over residues 242 to 255; that stretch reads AGLGPGVSGSGGPA. 3 C2H2-type zinc fingers span residues 285-307, 313-335, and 341-364; these read YVCAACERSYVTLSSLKRHSNVH, YPCRYCEKVFALAEYRTKHEVWH, and YQCIFCWDTFVTYYNLKTHQRAFH. Ser367 carries the phosphoserine modification. A disordered region spans residues 404-578; the sequence is KTYSQGAPEA…QLQAPPPLCQ (175 aa). Positions 430–446 are enriched in pro residues; it reads SPQPLPPPAPEPGPPPS. Over residues 467 to 477 the composition is skewed to gly residues; it reads AAGGGPAGTGG. 2 stretches are compositionally biased toward low complexity: residues 478-488 and 507-529; these read SQAASVITYTT and ATPTSPASTAVSPATAAGPATAT. Lys548 is covalently cross-linked (Glycyl lysine isopeptide (Lys-Gly) (interchain with G-Cter in SUMO2)). The span at 552–565 shows a compositional bias: gly residues; the sequence is GLSGSGGSPTGTGR. Lys590 participates in a covalent cross-link: Glycyl lysine isopeptide (Lys-Gly) (interchain with G-Cter in SUMO2). Residues 591 to 600 are compositionally biased toward basic and acidic residues; that stretch reads RRISETDLRP. 4 disordered regions span residues 591 to 700, 715 to 738, 759 to 839, and 854 to 880; these read RRIS…ERRH, LRKHQEAHSGGSHTSRTGRRSSTR, QRHA…GGGS, and GGSREPSAGKGKPGNEGSLGASEGDRM. Residues 604–627 are compositionally biased toward acidic residues; the sequence is SGEEVEESEEEEEEEEEEDQEEQE. Over residues 628–637 the composition is skewed to basic and acidic residues; the sequence is ESKAGGEDQL. 2 C2H2-type zinc fingers span residues 700–722 and 739–761; these read HRCGDCAQAFATVRKLRKHQEAH and FTCPHCAKVCKTAAALNRHGQRH. Residues Thr769 and Thr771 each carry the phosphothreonine; by HIPK2 modification. The span at 799–820 shows a compositional bias: low complexity; that stretch reads SSSSGEAGSGSAAAAEASESAS. The residue at position 953 (Thr953) is a Phosphothreonine; by HIPK2.

In terms of assembly, interacts with HIPK2. Interacts with CBFA2T3. Interacts with ZBTB38. Post-translationally, phosphorylated by HIPK2. This phosphorylation reduces stability and triggers ZBTB4 protein degradation in response to DNA damage. Expressed in adult and aged myogenic satellite cells.

The protein localises to the nucleus. It is found in the chromosome. Functionally, transcriptional repressor with bimodal DNA-binding specificity. Represses transcription in a methyl-CpG-dependent manner. Binds with a higher affinity to methylated CpG dinucleotides in the consensus sequence 5'-CGCG-3' but can also bind to the non-methylated consensus sequence 5'-CTGCNA-3' also known as the consensus kaiso binding site (KBS). Can also bind specifically to a single methyl-CpG pair and can bind hemimethylated DNA but with a lower affinity compared to methylated DNA. Plays a role in postnatal myogenesis, may be involved in the regulation of satellite cells self-renewal. The protein is Zinc finger and BTB domain-containing protein 4 (Zbtb4) of Mus musculus (Mouse).